The primary structure comprises 963 residues: Spliceosome associated factor 3, U4/U6 recycling protein (963 aa).

Residues 1–11 show a composition bias toward low complexity; the sequence is MATAAETSASE. Disordered stretches follow at residues 1–36 and 50–90; these read MATAAETSASEPEAESKAGPKADGEEDEVKAARTRR and TMGP…YDEE. Alanine 2 bears the N-acetylalanine mark. Residues 2 to 351 are mediates interaction with PRPF3; that stretch reads ATAAETSASE…LVPDLWIRYS (350 aa). Residues serine 10 and serine 16 each carry the phosphoserine modification. Residues 14–23 show a composition bias toward basic and acidic residues; it reads AESKAGPKAD. A coiled-coil region spans residues 21–46; sequence KADGEEDEVKAARTRRKVLSRAVAAA. The segment covering 57 to 69 has biased composition (acidic residues); it reads QQEEGVSESDGDE. The stretch at 82-110 forms a coiled coil; sequence EYEWEYDEEEEKNQLEIERLEEQLSINVY. HAT repeat units follow at residues 126-158, 164-195, 201-237, 242-275, 324-356, 359-391, 394-430, and 487-520; these read GELTKVRMARQKMSEIFPLTEELWLEWLHDEIS, LDREHVYDLFEKAVKDYICPNIWLEYGQYSVG, GGLEKVRSVFERALSSVGLHMTKGLALWEAYREFESA, ARLEKVHSLFRRQLAIPLYDMEATFAEYEEWSED, GDPARIQLIFERALVENCLVPDLWIRYSQYLDR, KVKDLVLSVHNRAIRNCPWTVALWSRYLLAMER, VDHQVISVTFEKALNAGFIQATDYVEIWQAYLDYLRR, and NNMQKARELWDSIMTRGNAKYANMWLEYYNLERA. Serine 215 is modified (phosphoserine). The tract at residues 487–520 is required for interaction with USP4; the sequence is NNMQKARELWDSIMTRGNAKYANMWLEYYNLERA. Positions 537-953 are necessary and sufficient for U6 snRNA binding; it reads CTSDYPEHVC…AATEAPKMSN (417 aa). Positions 559–619 form a coiled coil; that stretch reads LEDWDIAVQK…ALKKKKKIRG (61 aa). Residues 590 to 601 show a composition bias toward basic and acidic residues; it reads LVQQEEEKAEQR. Residues 590–694 are disordered; it reads LVQQEEEKAE…AASLKRDMPK (105 aa). Residues 600–670 are required for nuclear localization; the sequence is QRKRARAEKK…EVAAGPAGKC (71 aa). Positions 601-608 match the Nuclear localization signal motif; it reads RKRARAEK. Over residues 602 to 617 the composition is skewed to basic residues; it reads KRARAEKKALKKKKKI. Acidic residues predominate over residues 626–639; that stretch reads DEDDEKEWGDDEEE. The residue at position 650 (serine 650) is a Phosphoserine. Phosphothreonine is present on threonine 657. Positions 677–694 are enriched in basic and acidic residues; the sequence is PPSKQKEKAASLKRDMPK. The RRM 1 domain maps to 704–782; sequence ITVFVSNLPY…RPMFVSPCVD (79 aa). Phosphoserine is present on residues serine 769, serine 795, and serine 852. An RRM 2 domain is found at 801–878; it reads HKLFISGLPF…NIIKVAISNP (78 aa). The disordered stretch occupies residues 878–898; the sequence is PPQRKVPEKPETRKAPGGPML. A compositionally biased stretch (basic and acidic residues) spans 882–891; sequence KVPEKPETRK. Position 906 is an omega-N-methylarginine (arginine 906). Residues 920–948 are disordered; that stretch reads LQRPSAAAPQAENGPAAAPAVAAPAATEA. The segment covering 925–948 has biased composition (low complexity); it reads AAAPQAENGPAAAPAVAAPAATEA.

Component of the 7SK snRNP complex at least composed of P-TEFb (composed of CDK9 and CCNT1/cyclin-T1), HEXIM1, HEXIM2, BCDIN3, SART3 proteins and 7SK and U6 snRNAs. Interacts with AGO1 and AGO2. Interacts with PRPF3 and USP4; the interaction with PRPF3 is direct and recruits USP4 to its substrate PRPF3. Interacts with USP15; the interaction is direct. Interacts with HIV-1 Tat. As to expression, ubiquitously expressed.

Its subcellular location is the nucleus. It localises to the nucleoplasm. The protein resides in the cajal body. It is found in the nucleus speckle. The protein localises to the cytoplasm. U6 snRNP-binding protein that functions as a recycling factor of the splicing machinery. Promotes the initial reassembly of U4 and U6 snRNPs following their ejection from the spliceosome during its maturation. Also binds U6atac snRNPs and may function as a recycling factor for U4atac/U6atac spliceosomal snRNP, an initial step in the assembly of U12-type spliceosomal complex. The U12-type spliceosomal complex plays a role in the splicing of introns with non-canonical splice sites. May also function as a substrate-targeting factor for deubiquitinases like USP4 and USP15. Recruits USP4 to ubiquitinated PRPF3 within the U4/U5/U6 tri-snRNP complex, promoting PRPF3 deubiquitination and thereby regulating the spliceosome U4/U5/U6 tri-snRNP spliceosomal complex disassembly. May also recruit the deubiquitinase USP15 to histone H2B and mediate histone deubiquitination, thereby regulating gene expression and/or DNA repair. May play a role in hematopoiesis probably through transcription regulation of specific genes including MYC. In terms of biological role, regulates Tat transactivation activity through direct interaction. May be a cellular factor for HIV-1 gene expression and viral replication. This chain is Spliceosome associated factor 3, U4/U6 recycling protein, found in Homo sapiens (Human).